The primary structure comprises 606 residues: MACPF domain-containing protein At4g24290 (606 aa).

Residues 1-332 (MALRLPASKA…PPIEELHQFL (332 aa)) enclose the MACPF domain.

The protein belongs to the complement C6/C7/C8/C9 (TC 1.C.39) family.

Negatively controls the salicylic acid (SA)-mediated pathway of programmed cell death in plant immunity. This is MACPF domain-containing protein At4g24290 from Arabidopsis thaliana (Mouse-ear cress).